The chain runs to 146 residues: Hemoglobin subunit beta (146 aa).

Valine 1 is subject to N-acetylvaline. A Globin domain is found at 2 to 146 (HLTGEEKSAV…VANALAHKYH (145 aa)). Threonine 12 is subject to Phosphothreonine. At serine 44 the chain carries Phosphoserine. N6-acetyllysine is present on lysine 59. Residue histidine 63 coordinates heme b. Position 82 is an N6-acetyllysine (lysine 82). A heme b-binding site is contributed by histidine 92. The residue at position 93 (cysteine 93) is an S-nitrosocysteine. An N6-acetyllysine modification is found at lysine 144.

This sequence belongs to the globin family. Heterotetramer of two alpha chains and two beta chains. As to expression, red blood cells.

Involved in oxygen transport from the lung to the various peripheral tissues. The sequence is that of Hemoglobin subunit beta (HBB) from Phoca vitulina (Harbor seal).